Reading from the N-terminus, the 565-residue chain is Protein unc-87 (565 aa).

Residues 1–27 (MLSFNNTTSASSFQSASSRYLMSSSSS) show a composition bias toward low complexity. 2 disordered regions span residues 1-83 (MLSF…TTNS) and 237-262 (IPSQ…RNTN). A compositionally biased stretch (basic and acidic residues) spans 54–69 (EALERLRPNTASRERN). 3 Calponin-like repeats span residues 237–262 (IPSQ…RNTN), 285–310 (VRLQ…RDVC), and 338–363 (VRLQ…RRET). Residues 250–262 (KLMTNFGTPRNTN) show a composition bias toward polar residues. Positions 369-381 (SKHPEYDHEKPDQ) are enriched in basic and acidic residues. Positions 369-400 (SKHPEYDHEKPDQSEIPLQSGTNKFASQKGMT) are disordered. The span at 384-398 (IPLQSGTNKFASQKG) shows a compositional bias: polar residues. 4 Calponin-like repeats span residues 384–409 (IPLQ…RRET), 431–456 (IPSQ…RWEV), 472–497 (VRLQ…RNTT), and 517–542 (IPSQ…RDVK).

This sequence belongs to the calponin family. Monomer. Interacts with F-actin. Interacts with myosin. In terms of tissue distribution, expressed in the body wall muscles. Isoform a: Expression in the pharynx, anal depressor muscle, uterine muscle, vulva and unidentified neurons in the head and the ventral region. Isoform b: Expression in the body wall muscles, spermatheca, vulva and in the myoepithelial sheath.

It is found in the cytoplasm. Its subcellular location is the myofibril. The protein resides in the sarcomere. It localises to the i band. Its function is as follows. Thin filament-associated protein that is implicated in actin bundling and actin filament dynamics. Exhibits F-actin cross-linking activity. Required for the maintenance of sarcomeric actin organization in striated muscles. Competes with unc-60 isoform b for actin binding and protects actin filaments from depolymerization by unc-60, thereby contributing to actin filament stability. Cooperates with myosin to form actomyosin bundles and inhibits actomyosin ATPase activity and actomyosin motility. Might protect the myofilaments from mechanical stress. In terms of biological role, acts as a negative regulator of myosin-dependent contractility of smooth muscle-like cells in the somatic gonad. This is Protein unc-87 (unc-87) from Caenorhabditis elegans.